The sequence spans 445 residues: tRNA-2-methylthio-N(6)-dimethylallyladenosine synthase (445 aa).

In terms of domain architecture, MTTase N-terminal spans 4-121 (NKIYIKTWGC…LPNMIQEVKK (118 aa)). Positions 13, 50, 84, 158, 162, and 165 each coordinate [4Fe-4S] cluster. The Radical SAM core domain maps to 144–376 (RKPKVTAFVS…QTLIRNNTTM (233 aa)). The TRAM domain maps to 379–442 (QKMLGSIQSV…PNSLRGSYEK (64 aa)).

Belongs to the methylthiotransferase family. MiaB subfamily. Monomer. [4Fe-4S] cluster serves as cofactor.

It localises to the cytoplasm. It carries out the reaction N(6)-dimethylallyladenosine(37) in tRNA + (sulfur carrier)-SH + AH2 + 2 S-adenosyl-L-methionine = 2-methylsulfanyl-N(6)-dimethylallyladenosine(37) in tRNA + (sulfur carrier)-H + 5'-deoxyadenosine + L-methionine + A + S-adenosyl-L-homocysteine + 2 H(+). Functionally, catalyzes the methylthiolation of N6-(dimethylallyl)adenosine (i(6)A), leading to the formation of 2-methylthio-N6-(dimethylallyl)adenosine (ms(2)i(6)A) at position 37 in tRNAs that read codons beginning with uridine. In Buchnera aphidicola subsp. Baizongia pistaciae (strain Bp), this protein is tRNA-2-methylthio-N(6)-dimethylallyladenosine synthase.